We begin with the raw amino-acid sequence, 293 residues long: tRNA pseudouridine synthase B (293 aa).

The Nucleophile role is filled by Asp40.

This sequence belongs to the pseudouridine synthase TruB family. Type 1 subfamily.

It catalyses the reaction uridine(55) in tRNA = pseudouridine(55) in tRNA. Responsible for synthesis of pseudouridine from uracil-55 in the psi GC loop of transfer RNAs. The chain is tRNA pseudouridine synthase B from Rickettsia akari (strain Hartford).